Reading from the N-terminus, the 1568-residue chain is Myosin-2 (1568 aa).

One can recognise a Myosin N-terminal SH3-like domain in the interval 4 to 57 (EVGTRCWYPHKELGWIGAEVIKNEVKDGKYHLELSLEDDEVVSVDTEDLNDDKN). The Myosin motor domain occupies 70–783 (EATEDLTSLS…MLAYLEKLRS (714 aa)). Position 164–171 (164–171 (GESGAGKT)) interacts with ATP. The segment at 443–523 (FIGVLDIYGF…LGILSLLDEE (81 aa)) is actin-binding. The tract at residues 619–641 (KKAELEQNNPGNKKPGPARTVNR) is disordered. IQ domains lie at 786–808 (MHNS…QYLK), 809–833 (ISQA…YHEM), 834–856 (KVHS…NVFN), 857–881 (VLIT…KREH), 882–904 (EYNA…TFLN), and 905–934 (TKRD…DAKS). Positions 944–1088 (KLENKVIELT…ISRLQTAMSL (145 aa)) form a coiled coil. The tract at residues 1089-1568 (GTVTTSVLPQ…VAQQVVQDGH (480 aa)) is non alpha-helical, tail domain. Residues 1223–1498 (AQVLTTIQKV…LRYVADIVKK (276 aa)) enclose the Dilute domain.

This sequence belongs to the TRAFAC class myosin-kinesin ATPase superfamily. Myosin family. Homodimer. Interacts with calmodulin (CMD1) and the myosin light chain MLC1 through its IQ repeats.

In terms of biological role, myosin heavy chain that is required for the cell cycle-regulated transport of various organelles and proteins for their segregation. Functions by binding with its tail domain to receptor proteins on organelles and exerting force with its N-terminal motor domain against actin filaments, thereby transporting its cargo along polarized actin cables. The protein is Myosin-2 (MYO2) of Saccharomyces uvarum (strain ATCC 76518 / CBS 7001 / CLIB 283 / NBRC 10550 / MCYC 623 / NCYC 2669 / NRRL Y-11845) (Yeast).